A 438-amino-acid polypeptide reads, in one-letter code: Putative permease HI_0125 (438 aa).

13 helical membrane-spanning segments follow: residues 21–41 (IIAG…VPNM), 51–71 (SVFI…GLWA), 73–93 (APMA…SLVI), 97–117 (VAIP…TLIS), 137–157 (AGIG…GLVV), 167–187 (LGDF…LIIG), 195–215 (GGIL…DPNV), 238–258 (FMGA…MTAV), 296–316 (LFSG…AAGT), 326–346 (AIVV…AFLV), 347–367 (PGYA…SNVS), 386–406 (FIVL…ALVI), and 418–438 (NVGT…GWAI). 315–322 (GTAAGGKT) lines the ATP pocket.

This sequence belongs to the nucleobase:cation symporter-2 (NCS2) (TC 2.A.40) family. Azg-like subfamily.

It localises to the cell membrane. This Haemophilus influenzae (strain ATCC 51907 / DSM 11121 / KW20 / Rd) protein is Putative permease HI_0125.